We begin with the raw amino-acid sequence, 835 residues long: Microcephalin (835 aa).

Residues 1-93 (MAAPILKDVV…AHIDESLFPA (93 aa)) enclose the BRCT 1 domain. A phosphoserine mark is found at Ser279, Ser287, Ser296, and Ser333. 2 disordered regions span residues 332 to 376 (LSPT…RKRS) and 417 to 442 (SPDN…PAQF). Thr335 is modified (phosphothreonine). A compositionally biased stretch (basic residues) spans 343 to 361 (LLIHSRPRSSSVKRKRVSH). The residue at position 548 (Ser548) is a Phosphoserine. The tract at residues 555–583 (AVDLKSTQNKGTTSKISNSSEGEAQSEHE) is disordered. Polar residues predominate over residues 559–577 (KSTQNKGTTSKISNSSEGE). BRCT domains lie at 640–730 (SGRG…PFEL) and 751–833 (YRGT…NYLL).

Interacts with CDC27 and maybe other components of the APC/C complex. Interacts with histone variant H2AX under DNA damage conditions.

The protein resides in the cytoplasm. Its subcellular location is the cytoskeleton. The protein localises to the microtubule organizing center. It is found in the centrosome. In terms of biological role, implicated in chromosome condensation and DNA damage induced cellular responses. May play a role in neurogenesis and regulation of the size of the cerebral cortex. This is Microcephalin from Pan troglodytes (Chimpanzee).